A 297-amino-acid polypeptide reads, in one-letter code: Bifunctional protein FolD 1 (297 aa).

Residues 164–166 (GRS) and threonine 230 each bind NADP(+).

The protein belongs to the tetrahydrofolate dehydrogenase/cyclohydrolase family. As to quaternary structure, homodimer.

The catalysed reaction is (6R)-5,10-methylene-5,6,7,8-tetrahydrofolate + NADP(+) = (6R)-5,10-methenyltetrahydrofolate + NADPH. The enzyme catalyses (6R)-5,10-methenyltetrahydrofolate + H2O = (6R)-10-formyltetrahydrofolate + H(+). The protein operates within one-carbon metabolism; tetrahydrofolate interconversion. Functionally, catalyzes the oxidation of 5,10-methylenetetrahydrofolate to 5,10-methenyltetrahydrofolate and then the hydrolysis of 5,10-methenyltetrahydrofolate to 10-formyltetrahydrofolate. The polypeptide is Bifunctional protein FolD 1 (Rhodococcus jostii (strain RHA1)).